We begin with the raw amino-acid sequence, 850 residues long: Coiled-coil and C2 domain-containing protein 1B (850 aa).

A compositionally biased stretch (basic residues) spans 1-10; that stretch reads MPGPRPRKGP. Disordered stretches follow at residues 1–21, 54–73, and 114–145; these read MPGPRPRKGPKTSGQGAETAK, LTGETGSTSRKPAPKGRAPL, and GVDEETGLVDDSEETSPDLSEEKTRDNTEQPV. Residues 114–129 are compositionally biased toward acidic residues; the sequence is GVDEETGLVDDSEETS. Residues 167-213 are a coiled coil; the sequence is LQALLEERIQNYREAAASAKEAGEAAKARRCERGLKTLESQLATVRK. Disordered regions lie at residues 215 to 277 and 436 to 525; these read GKIC…SDPD and FAEL…SPSV. The segment covering 234-244 has biased composition (basic and acidic residues); that stretch reads AHQERPSKDSE. Over residues 440 to 450 the composition is skewed to pro residues; it reads PVPPGFPPIPG. 2 stretches are compositionally biased toward low complexity: residues 489–502 and 511–524; these read PAQAPLAKKPAQPL and EPKASSSKESLSPS. Ser585 bears the Phosphoserine mark. Thr588 carries the post-translational modification Phosphothreonine. Residues 668-807 enclose the C2 domain; the sequence is DPPSHHFELK…EKECEIREIM (140 aa).

As to quaternary structure, interacts with CHMP4B. Expressed in epididymal sperm but not in testicular sperm (at protein level).

Its subcellular location is the nucleus. Its function is as follows. Transcription factor that binds specifically to the DRE (dual repressor element) and represses HTR1A gene transcription in neuronal cells. The polypeptide is Coiled-coil and C2 domain-containing protein 1B (Cc2d1b) (Rattus norvegicus (Rat)).